The following is a 23-amino-acid chain: Elongation factor Tu (23 aa).

The protein belongs to the GTP-binding elongation factor family. EF-Tu/EF-1A subfamily. Monomer. Post-translationally, the N-terminus is blocked. The C-terminus may be subjected to proteolysis.

Its subcellular location is the cytoplasm. This protein promotes the GTP-dependent binding of aminoacyl-tRNA to the A-site of ribosomes during protein biosynthesis. In Delftia acidovorans (Pseudomonas acidovorans), this protein is Elongation factor Tu (tuf).